The primary structure comprises 314 residues: MAQYTIECVETRTEADNGQYGKFVLEPLERGQGTTLGNALRRVLLSNLEGTAVTAVRITGVNHEFATMKGIREDVLDILLNMKELVLRSYTSDIQIGRLAVQGPKRVTAADLELPTEVQVVHPRHYIATLAEDGQLEMEFQIERGKGYRAIERGSEDGAAIDYLSIDAIFMPVRKVNWTVESERSAANVEQDRLTLEIWTSGSLSPQEALSQAAKILVDQLRPLQEITFEPPAEPQRSAPNTVGQVPIEELQLSVRAYNCLKRAQINTVADLLEYTEEDLLEIKNFGQKSAEEVIEALQDKMGLSLPKDKPARS.

The tract at residues 1–228 (MAQYTIECVE…DQLRPLQEIT (228 aa)) is alpha N-terminal domain (alpha-NTD). Residues 241-314 (NTVGQVPIEE…SLPKDKPARS (74 aa)) form an alpha C-terminal domain (alpha-CTD) region.

The protein belongs to the RNA polymerase alpha chain family. In terms of assembly, in cyanobacteria the RNAP catalytic core is composed of 2 alpha, 1 beta, 1 beta', 1 gamma and 1 omega subunit. When a sigma factor is associated with the core the holoenzyme is formed, which can initiate transcription.

The catalysed reaction is RNA(n) + a ribonucleoside 5'-triphosphate = RNA(n+1) + diphosphate. Functionally, DNA-dependent RNA polymerase catalyzes the transcription of DNA into RNA using the four ribonucleoside triphosphates as substrates. The protein is DNA-directed RNA polymerase subunit alpha of Gloeobacter violaceus (strain ATCC 29082 / PCC 7421).